Reading from the N-terminus, the 158-residue chain is ABA-responsive protein ABR18 (158 aa).

It belongs to the BetVI family.

The polypeptide is ABA-responsive protein ABR18 (Pisum sativum (Garden pea)).